Here is a 138-residue protein sequence, read N- to C-terminus: Small ribosomal subunit protein uS11c (138 aa).

A disordered region spans residues methionine 1 to arginine 24. Positions glycine 9 to arginine 24 are enriched in basic residues.

The protein belongs to the universal ribosomal protein uS11 family. Part of the 30S ribosomal subunit.

It localises to the plastid. The protein localises to the chloroplast. The polypeptide is Small ribosomal subunit protein uS11c (Panax ginseng (Korean ginseng)).